The sequence spans 84 residues: Large ribosomal subunit protein bL27 (84 aa).

The segment at 1–21 (MAHKKGVGSSRNGRDSDGQRL) is disordered.

The protein belongs to the bacterial ribosomal protein bL27 family.

The protein is Large ribosomal subunit protein bL27 of Trichlorobacter lovleyi (strain ATCC BAA-1151 / DSM 17278 / SZ) (Geobacter lovleyi).